The sequence spans 293 residues: ATP synthase gamma chain (293 aa).

This sequence belongs to the ATPase gamma chain family. F-type ATPases have 2 components, CF(1) - the catalytic core - and CF(0) - the membrane proton channel. CF(1) has five subunits: alpha(3), beta(3), gamma(1), delta(1), epsilon(1). CF(0) has three main subunits: a, b and c.

It localises to the cell inner membrane. Functionally, produces ATP from ADP in the presence of a proton gradient across the membrane. The gamma chain is believed to be important in regulating ATPase activity and the flow of protons through the CF(0) complex. In Psychrobacter cryohalolentis (strain ATCC BAA-1226 / DSM 17306 / VKM B-2378 / K5), this protein is ATP synthase gamma chain.